The sequence spans 215 residues: Sodium channel regulatory subunit beta-2 (215 aa).

The first 29 residues, Met-1 to Ser-29, serve as a signal peptide directing secretion. The Extracellular segment spans residues Met-30–Thr-157. The region spanning Val-32–Arg-154 is the Ig-like C2-type domain. 3 N-linked (GlcNAc...) asparagine glycosylation sites follow: Asn-42, Asn-66, and Asn-74. 2 cysteine pairs are disulfide-bonded: Cys-50–Cys-127 and Cys-72–Cys-75. The chain crosses the membrane as a helical span at residues Val-158 to Val-179. At Val-180–Lys-215 the chain is on the cytoplasmic side. Positions Lys-187 to Lys-215 are disordered. Positions Gln-189–Lys-215 are enriched in basic and acidic residues. Ser-192 bears the Phosphoserine mark. Thr-204 bears the Phosphothreonine mark.

This sequence belongs to the sodium channel auxiliary subunit SCN2B (TC 8.A.17) family. In terms of assembly, a voltage-gated sodium (Nav) channel consists of an ion-conducting pore-forming alpha subunit functional on its own that is regulated by one or more beta subunits. The beta subunit SCN2B is disulfide-linked to the pore-forming alpha subunit. Interacts with SCN1A; regulatory subunit of SCN1A/Nav1.1. Interacts with SCN2A; regulatory subunit of SCN2A/Nav1.2. Interacts with SCN3A; regulatory subunit of SCN3A/Nav1.3. Interacts with SCN5A; regulatory subunit of SCN5A/Nav1.5. Interacts with SCN8A; regulatory subunit of SCN8A/Nav1.6. Interacts with SCN9A; regulatory subunit of SCN9A/Nav1.7. Interacts with SCN10A; regulatory subunit of SCN10A/Nav1.8. Interacts with TNR; may play a crucial role in clustering and regulation of activity of SCN2B-containing Nav channels at nodes of Ranvier.

The protein localises to the cell membrane. Its subcellular location is the cell projection. It is found in the axon. Regulatory subunit of multiple voltage-gated sodium (Nav) channels directly mediating the depolarization of excitable membranes. Navs, also called VGSCs (voltage-gated sodium channels) or VDSCs (voltage-dependent sodium channels), operate by switching between closed and open conformations depending on the voltage difference across the membrane. In the open conformation they allow Na(+) ions to selectively pass through the pore, along their electrochemical gradient. The influx of Na+ ions provokes membrane depolarization, initiating the propagation of electrical signals throughout cells and tissues. The accessory beta subunits participate in localization and functional modulation of the Nav channels. Modulates the activity of SCN1A/Nav1.1, SCN2A/Nav1.2, SCN2A/Nav1.3, SCN5A/Nav1.5, SCN8A/Nav1.6, SCN9A/Nav1.7 and SCN10A/Nav1.8. This chain is Sodium channel regulatory subunit beta-2, found in Rattus norvegicus (Rat).